A 1167-amino-acid polypeptide reads, in one-letter code: Carbamoyl phosphate synthase large chain (1167 aa).

Residues 1–455 are carboxyphosphate synthetic domain; it reads MPRRTDIKSI…SLQKALRGLE (455 aa). 12 residues coordinate ATP: Arg129, Arg221, Gly227, Gly228, Glu260, Val262, Glu267, Gly293, Val294, His295, Gln337, and Glu351. Residues 184–380 enclose the ATP-grasp 1 domain; that stretch reads LETRWNLGEG…IAKIAAKLAV (197 aa). Residues Gln337, Glu351, and Asn353 each contribute to the Mg(2+) site. Mn(2+)-binding residues include Gln337, Glu351, and Asn353. Residues 456–619 are oligomerization domain; that stretch reads TGLTGLDEIE…PFAGALANEA (164 aa). Residues 620–1031 are carbamoyl phosphate synthetic domain; it reads QVSSRKKVVI…AFAKSQLGAG (412 aa). The ATP-grasp 2 domain occupies 748 to 960; that stretch reads QKLLHKLGLS…IAKIAARIMA (213 aa). ATP is bound by residues Arg784, Thr844, Leu846, Glu851, Gly876, Ile877, His878, Ser879, Gln919, and Glu931. Residues Gln919, Glu931, and Asn933 each coordinate Mg(2+). Mn(2+) contacts are provided by Gln919, Glu931, and Asn933. The 136-residue stretch at 1032–1167 folds into the MGS-like domain; that stretch reads VDLPRSGTLF…EVRPLQEYFA (136 aa). The allosteric domain stretch occupies residues 1032–1167; sequence VDLPRSGTLF…EVRPLQEYFA (136 aa).

Belongs to the CarB family. As to quaternary structure, composed of two chains; the small (or glutamine) chain promotes the hydrolysis of glutamine to ammonia, which is used by the large (or ammonia) chain to synthesize carbamoyl phosphate. Tetramer of heterodimers (alpha,beta)4. Requires Mg(2+) as cofactor. Mn(2+) is required as a cofactor.

The enzyme catalyses hydrogencarbonate + L-glutamine + 2 ATP + H2O = carbamoyl phosphate + L-glutamate + 2 ADP + phosphate + 2 H(+). It catalyses the reaction hydrogencarbonate + NH4(+) + 2 ATP = carbamoyl phosphate + 2 ADP + phosphate + 2 H(+). It participates in amino-acid biosynthesis; L-arginine biosynthesis; carbamoyl phosphate from bicarbonate: step 1/1. The protein operates within pyrimidine metabolism; UMP biosynthesis via de novo pathway; (S)-dihydroorotate from bicarbonate: step 1/3. In terms of biological role, large subunit of the glutamine-dependent carbamoyl phosphate synthetase (CPSase). CPSase catalyzes the formation of carbamoyl phosphate from the ammonia moiety of glutamine, carbonate, and phosphate donated by ATP, constituting the first step of 2 biosynthetic pathways, one leading to arginine and/or urea and the other to pyrimidine nucleotides. The large subunit (synthetase) binds the substrates ammonia (free or transferred from glutamine from the small subunit), hydrogencarbonate and ATP and carries out an ATP-coupled ligase reaction, activating hydrogencarbonate by forming carboxy phosphate which reacts with ammonia to form carbamoyl phosphate. The sequence is that of Carbamoyl phosphate synthase large chain from Mesorhizobium japonicum (strain LMG 29417 / CECT 9101 / MAFF 303099) (Mesorhizobium loti (strain MAFF 303099)).